The chain runs to 576 residues: Lipoprotein LpqB (576 aa).

The signal sequence occupies residues M1–A16. The N-palmitoyl cysteine moiety is linked to residue C17. C17 carries the S-diacylglycerol cysteine lipid modification.

It belongs to the LpqB lipoprotein family.

The protein localises to the cell membrane. The chain is Lipoprotein LpqB from Bifidobacterium longum (strain NCC 2705).